Here is a 687-residue protein sequence, read N- to C-terminus: Protein FAR1-RELATED SEQUENCE 1 (687 aa).

An FAR1 domain is found at Glu35 to Thr137. In terms of domain architecture, MULE spans Lys211–Pro254. The segment at Phe440 to Gly476 adopts an SWIM-type zinc-finger fold. Residues Asn540–Ser562 are a coiled coil.

It belongs to the FHY3/FAR1 family. As to expression, expressed in rosette and cauline leaves, inflorescences stems, flowers and siliques.

It is found in the nucleus. Putative transcription activator involved in regulating light control of development. The chain is Protein FAR1-RELATED SEQUENCE 1 (FRS1) from Arabidopsis thaliana (Mouse-ear cress).